Here is a 204-residue protein sequence, read N- to C-terminus: Crossover junction endodeoxyribonuclease RuvC (204 aa).

Catalysis depends on residues aspartate 7, glutamate 68, and aspartate 141. Residues aspartate 7, glutamate 68, and aspartate 141 each contribute to the Mg(2+) site. Residues 164-204 (QAVAAHRTSGASRTPGAAGTPGPSRTPGAPGTSRTLKGRTA) are disordered.

Belongs to the RuvC family. In terms of assembly, homodimer which binds Holliday junction (HJ) DNA. The HJ becomes 2-fold symmetrical on binding to RuvC with unstacked arms; it has a different conformation from HJ DNA in complex with RuvA. In the full resolvosome a probable DNA-RuvA(4)-RuvB(12)-RuvC(2) complex forms which resolves the HJ. It depends on Mg(2+) as a cofactor.

The protein resides in the cytoplasm. It carries out the reaction Endonucleolytic cleavage at a junction such as a reciprocal single-stranded crossover between two homologous DNA duplexes (Holliday junction).. Its function is as follows. The RuvA-RuvB-RuvC complex processes Holliday junction (HJ) DNA during genetic recombination and DNA repair. Endonuclease that resolves HJ intermediates. Cleaves cruciform DNA by making single-stranded nicks across the HJ at symmetrical positions within the homologous arms, yielding a 5'-phosphate and a 3'-hydroxyl group; requires a central core of homology in the junction. The consensus cleavage sequence is 5'-(A/T)TT(C/G)-3'. Cleavage occurs on the 3'-side of the TT dinucleotide at the point of strand exchange. HJ branch migration catalyzed by RuvA-RuvB allows RuvC to scan DNA until it finds its consensus sequence, where it cleaves and resolves the cruciform DNA. This chain is Crossover junction endodeoxyribonuclease RuvC, found in Streptomyces griseus subsp. griseus (strain JCM 4626 / CBS 651.72 / NBRC 13350 / KCC S-0626 / ISP 5235).